A 488-amino-acid chain; its full sequence is Palmitoleoyl-protein carboxylesterase notum1 (488 aa).

Residues 1–20 (MAGALCVTLLLLLSTNTVSG) form the signal peptide. N-linked (GlcNAc...) asparagine glycosylation occurs at asparagine 90. Active-site charge relay system residues include serine 226, aspartate 334, and histidine 383.

Belongs to the pectinacetylesterase family. Notum subfamily. Expressed in the egg and through cleavage to gastrulation stages. Enriched in the animal (prospective ectoderm) and dorsal regions in early gastrula. Shows a dynamic expression during embryogenesis, in particular during neural induction and antero-posterior (AP) patterning.

It is found in the secreted. The catalysed reaction is [Wnt protein]-O-(9Z)-hexadecenoyl-L-serine + H2O = [Wnt protein]-L-serine + (9Z)-hexadecenoate + H(+). Carboxylesterase that acts as a key negative regulator of the Wnt signaling pathway by specifically mediating depalmitoleoylation of WNT proteins. Serine palmitoleoylation of WNT proteins is required for efficient binding to frizzled receptors. Functions in the prospective ectoderm and is required for neural induction. This is Palmitoleoyl-protein carboxylesterase notum1 from Xenopus laevis (African clawed frog).